Here is a 232-residue protein sequence, read N- to C-terminus: 5'-methylthioadenosine/S-adenosylhomocysteine nucleosidase (232 aa).

The active-site Proton acceptor is E14. Substrate is bound by residues G80, V154, and 175 to 176 (ME). D199 acts as the Proton donor in catalysis.

The protein belongs to the PNP/UDP phosphorylase family. MtnN subfamily.

The enzyme catalyses S-adenosyl-L-homocysteine + H2O = S-(5-deoxy-D-ribos-5-yl)-L-homocysteine + adenine. It carries out the reaction S-methyl-5'-thioadenosine + H2O = 5-(methylsulfanyl)-D-ribose + adenine. The catalysed reaction is 5'-deoxyadenosine + H2O = 5-deoxy-D-ribose + adenine. It participates in amino-acid biosynthesis; L-methionine biosynthesis via salvage pathway; S-methyl-5-thio-alpha-D-ribose 1-phosphate from S-methyl-5'-thioadenosine (hydrolase route): step 1/2. In terms of biological role, catalyzes the irreversible cleavage of the glycosidic bond in both 5'-methylthioadenosine (MTA) and S-adenosylhomocysteine (SAH/AdoHcy) to adenine and the corresponding thioribose, 5'-methylthioribose and S-ribosylhomocysteine, respectively. Also cleaves 5'-deoxyadenosine, a toxic by-product of radical S-adenosylmethionine (SAM) enzymes, into 5-deoxyribose and adenine. The sequence is that of 5'-methylthioadenosine/S-adenosylhomocysteine nucleosidase from Actinobacillus pleuropneumoniae serotype 3 (strain JL03).